We begin with the raw amino-acid sequence, 878 residues long: Valine--tRNA ligase (878 aa).

Residues 43–53 (PYPTGRLHLGH) carry the 'HIGH' region motif. Residues 527 to 531 (KMSKS) carry the 'KMSKS' region motif. Lys-530 is a binding site for ATP.

This sequence belongs to the class-I aminoacyl-tRNA synthetase family. ValS type 2 subfamily.

Its subcellular location is the cytoplasm. It catalyses the reaction tRNA(Val) + L-valine + ATP = L-valyl-tRNA(Val) + AMP + diphosphate. Catalyzes the attachment of valine to tRNA(Val). As ValRS can inadvertently accommodate and process structurally similar amino acids such as threonine, to avoid such errors, it has a 'posttransfer' editing activity that hydrolyzes mischarged Thr-tRNA(Val) in a tRNA-dependent manner. This Methanocaldococcus jannaschii (strain ATCC 43067 / DSM 2661 / JAL-1 / JCM 10045 / NBRC 100440) (Methanococcus jannaschii) protein is Valine--tRNA ligase.